Reading from the N-terminus, the 475-residue chain is Histidine--tRNA ligase (475 aa).

It belongs to the class-II aminoacyl-tRNA synthetase family. Homodimer.

Its subcellular location is the cytoplasm. The enzyme catalyses tRNA(His) + L-histidine + ATP = L-histidyl-tRNA(His) + AMP + diphosphate + H(+). This Flavobacterium johnsoniae (strain ATCC 17061 / DSM 2064 / JCM 8514 / BCRC 14874 / CCUG 350202 / NBRC 14942 / NCIMB 11054 / UW101) (Cytophaga johnsonae) protein is Histidine--tRNA ligase.